The following is a 90-amino-acid chain: UPF0237 protein NMB1653 (90 aa).

The ACT domain maps to 5–83 (VITVIGKDRV…LDIRMQNEEI (79 aa)).

The protein belongs to the UPF0237 family.

This Neisseria meningitidis serogroup B (strain ATCC BAA-335 / MC58) protein is UPF0237 protein NMB1653.